The chain runs to 92 residues: uncharacterized protein (92 aa).

The next 3 membrane-spanning stretches (helical) occupy residues 1–21 (MNIY…LVGL), 30–50 (ANVL…IVVI), and 62–82 (IALA…KVIG).

To M.thermoautotrophicum MTH1250.

Its subcellular location is the cell membrane. This is an uncharacterized protein from Methanocaldococcus jannaschii (strain ATCC 43067 / DSM 2661 / JAL-1 / JCM 10045 / NBRC 100440) (Methanococcus jannaschii).